The sequence spans 726 residues: Catalase-peroxidase (726 aa).

The tryptophyl-tyrosyl-methioninium (Trp-Tyr) (with M-240) cross-link spans 91–214 (WHSAGTYRIA…LGAVQMGLIY (124 aa)). His-92 serves as the catalytic Proton acceptor. Positions 214-240 (YVNPEGPNGNPDPLAAARDIRETFARM) form a cross-link, tryptophyl-tyrosyl-methioninium (Tyr-Met) (with W-91). His-255 contacts heme b. The interval 335-362 (AHQWRPKAGAGADSVPDPHDPNKRRTPS) is disordered.

It belongs to the peroxidase family. Peroxidase/catalase subfamily. As to quaternary structure, homodimer or homotetramer. The cofactor is heme b. Formation of the three residue Trp-Tyr-Met cross-link is important for the catalase, but not the peroxidase activity of the enzyme.

It carries out the reaction H2O2 + AH2 = A + 2 H2O. The catalysed reaction is 2 H2O2 = O2 + 2 H2O. In terms of biological role, bifunctional enzyme with both catalase and broad-spectrum peroxidase activity. This is Catalase-peroxidase from Pseudomonas fluorescens (strain ATCC BAA-477 / NRRL B-23932 / Pf-5).